Consider the following 900-residue polypeptide: Alanine--tRNA ligase (900 aa).

Zn(2+) is bound by residues H604, H608, C708, and H712.

Belongs to the class-II aminoacyl-tRNA synthetase family. Zn(2+) is required as a cofactor.

Its subcellular location is the cytoplasm. The enzyme catalyses tRNA(Ala) + L-alanine + ATP = L-alanyl-tRNA(Ala) + AMP + diphosphate. Functionally, catalyzes the attachment of alanine to tRNA(Ala) in a two-step reaction: alanine is first activated by ATP to form Ala-AMP and then transferred to the acceptor end of tRNA(Ala). Also edits incorrectly charged Ser-tRNA(Ala) and Gly-tRNA(Ala) via its editing domain. This Saccharolobus islandicus (strain M.16.27) (Sulfolobus islandicus) protein is Alanine--tRNA ligase.